We begin with the raw amino-acid sequence, 163 residues long: NADH-quinone oxidoreductase subunit I (163 aa).

4Fe-4S ferredoxin-type domains lie at 54 to 84 (LRRY…IESD) and 94 to 123 (TRYD…ETHI). Cys-64, Cys-67, Cys-70, Cys-74, Cys-103, Cys-106, Cys-109, and Cys-113 together coordinate [4Fe-4S] cluster.

It belongs to the complex I 23 kDa subunit family. NDH-1 is composed of 14 different subunits. Subunits NuoA, H, J, K, L, M, N constitute the membrane sector of the complex. The cofactor is [4Fe-4S] cluster.

It localises to the cell inner membrane. The catalysed reaction is a quinone + NADH + 5 H(+)(in) = a quinol + NAD(+) + 4 H(+)(out). Its function is as follows. NDH-1 shuttles electrons from NADH, via FMN and iron-sulfur (Fe-S) centers, to quinones in the respiratory chain. The immediate electron acceptor for the enzyme in this species is believed to be ubiquinone. Couples the redox reaction to proton translocation (for every two electrons transferred, four hydrogen ions are translocated across the cytoplasmic membrane), and thus conserves the redox energy in a proton gradient. This is NADH-quinone oxidoreductase subunit I from Cupriavidus metallidurans (strain ATCC 43123 / DSM 2839 / NBRC 102507 / CH34) (Ralstonia metallidurans).